We begin with the raw amino-acid sequence, 62 residues long: uncharacterized protein (62 aa).

4Fe-4S ferredoxin-type domains lie at 2-31 (AVTI…EIEG) and 32-62 (DKVV…VEPE). [4Fe-4S] cluster contacts are provided by Cys-10, Cys-15, Cys-18, Cys-22, Cys-42, Cys-45, Cys-48, and Cys-52.

[4Fe-4S] cluster is required as a cofactor.

This is an uncharacterized protein from Methanocaldococcus jannaschii (strain ATCC 43067 / DSM 2661 / JAL-1 / JCM 10045 / NBRC 100440) (Methanococcus jannaschii).